A 235-amino-acid chain; its full sequence is Isopentenyl-diphosphate Delta-isomerase I (235 aa).

Lys-38 contributes to the substrate binding site. Positions 42 and 54 each coordinate Mg(2+). A Nudix hydrolase domain is found at Leu-52–Leu-204. Substrate is bound by residues Arg-73 and Lys-77. The active site involves Cys-89. Ser-90 is a substrate binding site. Glu-149 and Glu-151 together coordinate Mg(2+). Glu-151 is a catalytic residue.

It belongs to the IPP isomerase type 1 family. It depends on Mg(2+) as a cofactor.

The catalysed reaction is isopentenyl diphosphate = dimethylallyl diphosphate. It participates in isoprenoid biosynthesis; dimethylallyl diphosphate biosynthesis; dimethylallyl diphosphate from isopentenyl diphosphate: step 1/1. The protein operates within porphyrin-containing compound metabolism; chlorophyll biosynthesis. Catalyzes the 1,3-allylic rearrangement of the homoallylic substrate isopentenyl (IPP) to its highly electrophilic allylic isomer, dimethylallyl diphosphate (DMAPP). The polypeptide is Isopentenyl-diphosphate Delta-isomerase I (IPI1) (Camptotheca acuminata (Happy tree)).